The sequence spans 305 residues: UDP-3-O-acyl-N-acetylglucosamine deacetylase (305 aa).

Positions 78, 237, and 241 each coordinate Zn(2+). Catalysis depends on H264, which acts as the Proton donor.

It belongs to the LpxC family. The cofactor is Zn(2+).

It carries out the reaction a UDP-3-O-[(3R)-3-hydroxyacyl]-N-acetyl-alpha-D-glucosamine + H2O = a UDP-3-O-[(3R)-3-hydroxyacyl]-alpha-D-glucosamine + acetate. The protein operates within glycolipid biosynthesis; lipid IV(A) biosynthesis; lipid IV(A) from (3R)-3-hydroxytetradecanoyl-[acyl-carrier-protein] and UDP-N-acetyl-alpha-D-glucosamine: step 2/6. Catalyzes the hydrolysis of UDP-3-O-myristoyl-N-acetylglucosamine to form UDP-3-O-myristoylglucosamine and acetate, the committed step in lipid A biosynthesis. The polypeptide is UDP-3-O-acyl-N-acetylglucosamine deacetylase (Burkholderia pseudomallei (strain 668)).